We begin with the raw amino-acid sequence, 163 residues long: 3-isopropylmalate dehydratase small subunit (163 aa).

This sequence belongs to the LeuD family. LeuD type 2 subfamily. In terms of assembly, heterodimer of LeuC and LeuD.

It carries out the reaction (2R,3S)-3-isopropylmalate = (2S)-2-isopropylmalate. It participates in amino-acid biosynthesis; L-leucine biosynthesis; L-leucine from 3-methyl-2-oxobutanoate: step 2/4. Functionally, catalyzes the isomerization between 2-isopropylmalate and 3-isopropylmalate, via the formation of 2-isopropylmaleate. In Pyrococcus horikoshii (strain ATCC 700860 / DSM 12428 / JCM 9974 / NBRC 100139 / OT-3), this protein is 3-isopropylmalate dehydratase small subunit (leuD).